The sequence spans 300 residues: 4-hydroxy-tetrahydrodipicolinate synthase (300 aa).

Thr-45 lines the pyruvate pocket. Catalysis depends on Tyr-140, which acts as the Proton donor/acceptor. Lys-169 functions as the Schiff-base intermediate with substrate in the catalytic mechanism. Ile-210 is a binding site for pyruvate.

It belongs to the DapA family. In terms of assembly, homotetramer; dimer of dimers.

It localises to the cytoplasm. It carries out the reaction L-aspartate 4-semialdehyde + pyruvate = (2S,4S)-4-hydroxy-2,3,4,5-tetrahydrodipicolinate + H2O + H(+). Its pathway is amino-acid biosynthesis; L-lysine biosynthesis via DAP pathway; (S)-tetrahydrodipicolinate from L-aspartate: step 3/4. Functionally, catalyzes the condensation of (S)-aspartate-beta-semialdehyde [(S)-ASA] and pyruvate to 4-hydroxy-tetrahydrodipicolinate (HTPA). This chain is 4-hydroxy-tetrahydrodipicolinate synthase, found in Helicobacter pylori (strain P12).